The following is a 574-amino-acid chain: Glycine--tRNA ligase (574 aa).

Residues Arg96 and Glu162 each coordinate substrate. ATP contacts are provided by residues 194–196, 204–209, 327–328, and 450–453; these read RNE, IRLREF, EC, and GIDR. Residue 209–213 participates in substrate binding; that stretch reads FTQAE. Residue 446–450 coordinates substrate; that stretch reads EPSYG.

Belongs to the class-II aminoacyl-tRNA synthetase family.

The protein resides in the cytoplasm. The enzyme catalyses tRNA(Gly) + glycine + ATP = glycyl-tRNA(Gly) + AMP + diphosphate. Its function is as follows. Catalyzes the attachment of glycine to tRNA(Gly). The chain is Glycine--tRNA ligase from Methanococcus maripaludis (strain C7 / ATCC BAA-1331).